Here is a 137-residue protein sequence, read N- to C-terminus: Large ribosomal subunit protein eL28 (137 aa).

Ser2 bears the N-acetylserine mark. Residues Lys58 and Lys65 each participate in a glycyl lysine isopeptide (Lys-Gly) (interchain with G-Cter in SUMO2) cross-link. Position 115 is a phosphoserine (Ser115).

Belongs to the eukaryotic ribosomal protein eL28 family. Component of the large ribosomal subunit.

It is found in the cytoplasm. Its function is as follows. Component of the large ribosomal subunit. The ribosome is a large ribonucleoprotein complex responsible for the synthesis of proteins in the cell. This is Large ribosomal subunit protein eL28 (RPL28) from Oryctolagus cuniculus (Rabbit).